We begin with the raw amino-acid sequence, 762 residues long: Xaa-Pro dipeptidyl-peptidase (762 aa).

Active-site charge relay system residues include S349, D469, and H499.

This sequence belongs to the peptidase S15 family. As to quaternary structure, homodimer.

The protein localises to the cytoplasm. The enzyme catalyses Hydrolyzes Xaa-Pro-|- bonds to release unblocked, N-terminal dipeptides from substrates including Ala-Pro-|-p-nitroanilide and (sequentially) Tyr-Pro-|-Phe-Pro-|-Gly-Pro-|-Ile.. Its function is as follows. Removes N-terminal dipeptides sequentially from polypeptides having unsubstituted N-termini provided that the penultimate residue is proline. This is Xaa-Pro dipeptidyl-peptidase from Streptococcus sanguinis (strain SK36).